The following is a 579-amino-acid chain: 3-hydroxy-3-methylglutaryl-coenzyme A reductase (579 aa).

Positions 1–22 are disordered; the sequence is MEVRGGVGQGSAARHPPAPEPS. A run of 2 helical transmembrane segments spans residues 36-56 and 80-100; these read LPIRHTNLIFSALFAASLAYL and AIFGLVASLIYLLSFFGIAFV. Residues 101–153 are linker; sequence QSIVSSGDDDEDFLVGSGSSGSAAAPSRQHAQAPAPCELLGSPAAAPEKMPED. Residues 154 to 579 are catalytic; sequence DEEIVASVVA…EKTRQREVDV (426 aa). The active-site Charge relay system is the glutamate 247. N-linked (GlcNAc...) asparagine glycosylation occurs at asparagine 311. Residues lysine 379 and aspartate 455 each act as charge relay system in the active site. The helical transmembrane segment at 524–544 threads the bilayer; sequence LLATVVAGGVLAGELSLLSAL. The Proton donor role is filled by histidine 553. The segment at 555–579 is disordered; the sequence is KYNRSSKDVSSTTATEKTRQREVDV. Asparagine 557 carries an N-linked (GlcNAc...) asparagine glycan. Residues 570–579 show a composition bias toward basic and acidic residues; that stretch reads EKTRQREVDV.

It belongs to the HMG-CoA reductase family.

It localises to the endoplasmic reticulum membrane. The enzyme catalyses (R)-mevalonate + 2 NADP(+) + CoA = (3S)-3-hydroxy-3-methylglutaryl-CoA + 2 NADPH + 2 H(+). The protein operates within metabolic intermediate biosynthesis; (R)-mevalonate biosynthesis; (R)-mevalonate from acetyl-CoA: step 3/3. Its function is as follows. Catalyzes the synthesis of mevalonate. The specific precursor of all isoprenoid compounds present in plants. The polypeptide is 3-hydroxy-3-methylglutaryl-coenzyme A reductase (HMGR) (Zea mays (Maize)).